The chain runs to 153 residues: Ergochrome gene cluster protein CPUR_05425 (153 aa).

It functions in the pathway pigment biosynthesis. Functionally, part of the ergochrome gene cluster responsible for the typical purple-black color of the ergot sclerotia. The ergochrome gene cluster produces several ergot pigments including the yellow ergochrome secalonic acid and its derivatives, as well as the red anthraquinones endocrocin and clavorubin. The pathway begins with the synthesis of atrochrysone thioester by the polyketide synthase (PKS) CPUR_05437. The atrochrysone carboxyl ACP thioesterase CPUR_05436 then breaks the thioester bond and releases the atrochrysone carboxylic acid from CPUR_05437. The atrochrysone carboxylic acid is then converted to atrochrysone which is further transformed into emodin anthrone. The next step is performed by the anthrone oxygenase CPUR_05434 that catalyzes the oxidation of emodinanthrone to emodin. Emodin is further modified to yield monodictyphenone via several steps involving CPUR_05427, CPUR_05428, CPUR_05429 and CPUR_05430. The short chain dehydrogenase/reductase CPUR_05418 then catalyzes the C-5 ketoreduction to give the xanthone skeleton of the monomeric units. Ergochromes formation requires further dimerization steps of different xanthone units, probably catalyzed by the cytochrome P450 monooxygenase CPUR_05419. CPUR_05425, CPUR_05426 and CPUR_05431 are unique to Claviceps, thus it is likely that they are involved in further modification of xanthone units or in their dimerization. The yellow ergochromes and the red anthraquinone pigments endocrocin and clavorubin are products from the same PKS derived precursors and the latter are likely shunt products in the pathway of xanthone biosynthesis. It is proposed that atrochrysone carboxylic acid released from the PKS CPUR_05437 can also be converted to endocrocin anthrone which is further oxidized into endocrocin by CPUR_05435. Endocrocin could be then modified to clavorubin, possibly by CPUR_05423 and CPUR_05431. Clavorubin is the principal anthraquinone metabolite produced by the cluster with a much higher yield compared to endocrocin. The sequence is that of Ergochrome gene cluster protein CPUR_05425 from Claviceps purpurea (strain 20.1) (Ergot fungus).